The primary structure comprises 320 residues: ATP synthase gamma chain (320 aa).

Belongs to the ATPase gamma chain family. In terms of assembly, F-type ATPases have 2 components, CF(1) - the catalytic core - and CF(0) - the membrane proton channel. CF(1) has five subunits: alpha(3), beta(3), gamma(1), delta(1), epsilon(1). CF(0) has three main subunits: a, b and c.

Its subcellular location is the cell membrane. Its function is as follows. Produces ATP from ADP in the presence of a proton gradient across the membrane. The gamma chain is believed to be important in regulating ATPase activity and the flow of protons through the CF(0) complex. The sequence is that of ATP synthase gamma chain from Lactobacillus helveticus (strain DPC 4571).